The chain runs to 78 residues: Putative Fe(2+) transport protein A (78 aa).

It belongs to the FeoA family.

In terms of biological role, might be involved in Fe(2+) ion uptake. This is Putative Fe(2+) transport protein A from Helicobacter pylori (strain J99 / ATCC 700824) (Campylobacter pylori J99).